The chain runs to 430 residues: Glucose-1-phosphate adenylyltransferase (430 aa).

Alpha-D-glucose 1-phosphate contacts are provided by residues glycine 163, 178–179 (EK), and serine 210.

Belongs to the bacterial/plant glucose-1-phosphate adenylyltransferase family. As to quaternary structure, homotetramer.

It catalyses the reaction alpha-D-glucose 1-phosphate + ATP + H(+) = ADP-alpha-D-glucose + diphosphate. Its pathway is glycan biosynthesis; glycogen biosynthesis. Functionally, involved in the biosynthesis of ADP-glucose, a building block required for the elongation reactions to produce glycogen. Catalyzes the reaction between ATP and alpha-D-glucose 1-phosphate (G1P) to produce pyrophosphate and ADP-Glc. The protein is Glucose-1-phosphate adenylyltransferase of Synechococcus elongatus (strain ATCC 33912 / PCC 7942 / FACHB-805) (Anacystis nidulans R2).